A 311-amino-acid polypeptide reads, in one-letter code: Pyrimidine-specific ribonucleoside hydrolase RihA (311 aa).

Residue histidine 240 is part of the active site.

Belongs to the IUNH family. RihA subfamily.

Its function is as follows. Hydrolyzes cytidine or uridine to ribose and cytosine or uracil, respectively. In Shigella boydii serotype 4 (strain Sb227), this protein is Pyrimidine-specific ribonucleoside hydrolase RihA.